The chain runs to 299 residues: tRNA dimethylallyltransferase (299 aa).

11-18 (GPTGSGKS) is an ATP binding site. A substrate-binding site is contributed by 13 to 18 (TGSGKS).

Belongs to the IPP transferase family. Monomer. Mg(2+) is required as a cofactor.

It catalyses the reaction adenosine(37) in tRNA + dimethylallyl diphosphate = N(6)-dimethylallyladenosine(37) in tRNA + diphosphate. In terms of biological role, catalyzes the transfer of a dimethylallyl group onto the adenine at position 37 in tRNAs that read codons beginning with uridine, leading to the formation of N6-(dimethylallyl)adenosine (i(6)A). The chain is tRNA dimethylallyltransferase from Pseudarthrobacter chlorophenolicus (strain ATCC 700700 / DSM 12829 / CIP 107037 / JCM 12360 / KCTC 9906 / NCIMB 13794 / A6) (Arthrobacter chlorophenolicus).